The chain runs to 286 residues: UDP-3-O-acyl-N-acetylglucosamine deacetylase (286 aa).

Positions 79, 237, and 241 each coordinate Zn(2+). The Proton donor role is filled by His-264.

The protein belongs to the LpxC family. The cofactor is Zn(2+).

It carries out the reaction a UDP-3-O-[(3R)-3-hydroxyacyl]-N-acetyl-alpha-D-glucosamine + H2O = a UDP-3-O-[(3R)-3-hydroxyacyl]-alpha-D-glucosamine + acetate. Its pathway is glycolipid biosynthesis; lipid IV(A) biosynthesis; lipid IV(A) from (3R)-3-hydroxytetradecanoyl-[acyl-carrier-protein] and UDP-N-acetyl-alpha-D-glucosamine: step 2/6. Catalyzes the hydrolysis of UDP-3-O-myristoyl-N-acetylglucosamine to form UDP-3-O-myristoylglucosamine and acetate, the committed step in lipid A biosynthesis. This is UDP-3-O-acyl-N-acetylglucosamine deacetylase from Brucella abortus (strain 2308).